We begin with the raw amino-acid sequence, 334 residues long: Ornithine carbamoyltransferase (334 aa).

Carbamoyl phosphate is bound by residues Ser-57–Thr-60, Gln-84, Arg-108, and His-135–Gln-138. Residues Asn-169, Asp-233, and Ser-237–Met-238 each bind L-ornithine. Residues Cys-275 to Leu-276 and Arg-320 contribute to the carbamoyl phosphate site.

Belongs to the aspartate/ornithine carbamoyltransferase superfamily. OTCase family.

Its subcellular location is the cytoplasm. The catalysed reaction is carbamoyl phosphate + L-ornithine = L-citrulline + phosphate + H(+). It functions in the pathway amino-acid biosynthesis; L-arginine biosynthesis; L-arginine from L-ornithine and carbamoyl phosphate: step 1/3. Functionally, reversibly catalyzes the transfer of the carbamoyl group from carbamoyl phosphate (CP) to the N(epsilon) atom of ornithine (ORN) to produce L-citrulline. The polypeptide is Ornithine carbamoyltransferase (argF) (Pasteurella multocida (strain Pm70)).